Here is an 873-residue protein sequence, read N- to C-terminus: Cilia- and flagella-associated protein 58 (873 aa).

Coiled-coil stretches lie at residues 106–609 (VDSA…VISE) and 642–832 (ETQY…QKRK). The interval 202 to 221 (QEIQHRQNEASRESRKKEKL) is disordered. Positions 204–221 (IQHRQNEASRESRKKEKL) are enriched in basic and acidic residues.

It belongs to the CFAP58 family. Interacts with ODFP2. In terms of tissue distribution, predominantly expressed in the testis. Also found at lower levels in ciliated cells and tissues such as neural progenitor cells and oviducts.

It localises to the cell projection. The protein resides in the cilium. Its subcellular location is the flagellum. The protein localises to the cytoplasm. It is found in the cytoskeleton. It localises to the microtubule organizing center. The protein resides in the centrosome. Functionally, has an essential role in the assembly and organization of the sperm flagellar axoneme. Required for the elongation of the primary cilium and sperm flagellar midpiece via modulation of the Notch signaling pathway. The chain is Cilia- and flagella-associated protein 58 from Mus musculus (Mouse).